The primary structure comprises 441 residues: GTPase Der (441 aa).

2 consecutive EngA-type G domains span residues 3 to 167 and 176 to 351; these read PLIA…PNKT and TRIA…EQFA. GTP-binding positions include 9-16, 56-60, 119-122, 182-189, 229-233, and 294-297; these read GRPNVGKS, DTGGF, NKID, DTAGI, and NKWD. In terms of domain architecture, KH-like spans 352–436; that stretch reads KRISTSDLNR…PMRLLFKGRE (85 aa).

Belongs to the TRAFAC class TrmE-Era-EngA-EngB-Septin-like GTPase superfamily. EngA (Der) GTPase family. Associates with the 50S ribosomal subunit.

Its function is as follows. GTPase that plays an essential role in the late steps of ribosome biogenesis. The protein is GTPase Der of Geotalea daltonii (strain DSM 22248 / JCM 15807 / FRC-32) (Geobacter daltonii).